A 426-amino-acid polypeptide reads, in one-letter code: Enolase (426 aa).

Gln-163 contributes to the (2R)-2-phosphoglycerate binding site. Glu-205 serves as the catalytic Proton donor. The Mg(2+) site is built by Asp-242, Glu-283, and Asp-310. (2R)-2-phosphoglycerate is bound by residues Lys-335, Arg-364, Ser-365, and Lys-386. Catalysis depends on Lys-335, which acts as the Proton acceptor.

This sequence belongs to the enolase family. Requires Mg(2+) as cofactor.

It localises to the cytoplasm. The protein localises to the secreted. It is found in the cell surface. The catalysed reaction is (2R)-2-phosphoglycerate = phosphoenolpyruvate + H2O. It functions in the pathway carbohydrate degradation; glycolysis; pyruvate from D-glyceraldehyde 3-phosphate: step 4/5. Catalyzes the reversible conversion of 2-phosphoglycerate (2-PG) into phosphoenolpyruvate (PEP). It is essential for the degradation of carbohydrates via glycolysis. In Clavibacter michiganensis subsp. michiganensis (strain NCPPB 382), this protein is Enolase.